A 124-amino-acid chain; its full sequence is Ribosome-binding factor A (124 aa).

It belongs to the RbfA family. In terms of assembly, monomer. Binds 30S ribosomal subunits, but not 50S ribosomal subunits or 70S ribosomes.

The protein localises to the cytoplasm. One of several proteins that assist in the late maturation steps of the functional core of the 30S ribosomal subunit. Associates with free 30S ribosomal subunits (but not with 30S subunits that are part of 70S ribosomes or polysomes). Required for efficient processing of 16S rRNA. May interact with the 5'-terminal helix region of 16S rRNA. The protein is Ribosome-binding factor A of Thiobacillus denitrificans (strain ATCC 25259 / T1).